The primary structure comprises 312 residues: MILNCNPFSGLFLSMYLVTVLGNLLIILAVSSNSHLHNLMYFFLSNLSFVDICFISTTIPKMLVNIHSQTKDISYIECLSQVYFLTTFGGMDNFLLTLMACDRYVAICHPLNYTVIMNLQLCALLILMFWLIMFCVSLIHVLLMNELNFSRGTEIPHFFCELAQVLKVANSDTHINNVFMYVVTSLLGLIPMTGILMSYSQIASSLLKMSSSVSKYKAFSTCGSHLCVVSLFYGSATIVYFCSSVLHSTHKKMIASLMYTVISPMLNPFIYSLRNKDVKGALGKLFIRVASCPLWSKDFRPKFILKPERQSL.

The Extracellular segment spans residues 1–6; the sequence is MILNCN. The helical transmembrane segment at 7–30 threads the bilayer; the sequence is PFSGLFLSMYLVTVLGNLLIILAV. Over 31–38 the chain is Cytoplasmic; it reads SSNSHLHN. Residues 39-60 traverse the membrane as a helical segment; it reads LMYFFLSNLSFVDICFISTTIP. Over 61 to 81 the chain is Extracellular; the sequence is KMLVNIHSQTKDISYIECLSQ. Cys78 and Cys160 are disulfide-bonded. The chain crosses the membrane as a helical span at residues 82–101; the sequence is VYFLTTFGGMDNFLLTLMAC. At 102–120 the chain is on the cytoplasmic side; it reads DRYVAICHPLNYTVIMNLQ. A helical transmembrane segment spans residues 121-139; the sequence is LCALLILMFWLIMFCVSLI. The Extracellular portion of the chain corresponds to 140–177; the sequence is HVLLMNELNFSRGTEIPHFFCELAQVLKVANSDTHINN. The N-linked (GlcNAc...) asparagine glycan is linked to Asn148. The helical transmembrane segment at 178 to 200 threads the bilayer; sequence VFMYVVTSLLGLIPMTGILMSYS. At 201–217 the chain is on the cytoplasmic side; the sequence is QIASSLLKMSSSVSKYK. The chain crosses the membrane as a helical span at residues 218–241; that stretch reads AFSTCGSHLCVVSLFYGSATIVYF. Over 242–253 the chain is Extracellular; that stretch reads CSSVLHSTHKKM. A helical membrane pass occupies residues 254-273; it reads IASLMYTVISPMLNPFIYSL. The Cytoplasmic portion of the chain corresponds to 274–312; that stretch reads RNKDVKGALGKLFIRVASCPLWSKDFRPKFILKPERQSL.

The protein belongs to the G-protein coupled receptor 1 family. In terms of tissue distribution, epithelium of the tongue; including the taste buds.

The protein localises to the cell membrane. Possible olfactory or taste receptor. The chain is Olfactory receptor 867 (Olr867) from Rattus norvegicus (Rat).